We begin with the raw amino-acid sequence, 446 residues long: Adenylosuccinate synthetase (446 aa).

GTP-binding positions include 12-18 (GDEGKGK) and 40-42 (GHT). The active-site Proton acceptor is aspartate 13. Aspartate 13 and glycine 40 together coordinate Mg(2+). IMP contacts are provided by residues 13–16 (DEGK), 38–41 (NAGH), threonine 128, arginine 142, glutamine 223, threonine 238, and arginine 302. Histidine 41 serves as the catalytic Proton donor. A substrate-binding site is contributed by 298-304 (TTTGRRR). GTP is bound by residues arginine 304, 330–332 (KLD), and 412–414 (SLG).

This sequence belongs to the adenylosuccinate synthetase family. In terms of assembly, homodimer. The cofactor is Mg(2+).

Its subcellular location is the cytoplasm. It carries out the reaction IMP + L-aspartate + GTP = N(6)-(1,2-dicarboxyethyl)-AMP + GDP + phosphate + 2 H(+). It participates in purine metabolism; AMP biosynthesis via de novo pathway; AMP from IMP: step 1/2. In terms of biological role, plays an important role in the de novo pathway of purine nucleotide biosynthesis. Catalyzes the first committed step in the biosynthesis of AMP from IMP. This is Adenylosuccinate synthetase from Acaryochloris marina (strain MBIC 11017).